Consider the following 226-residue polypeptide: MNENLFASFAAPTILGLPAAVLIILFPPLLVPTSKHLINNRLITTQQWLIQLTSKQMMTMHNTKGRTWSLMLVSLIIFIATTNLLGLLPHSFTPTTQLSMNLAMAIPLWAGTVVMGFRFKTKNALAHFLPQGTPTPLIPMLIIIETISLFIQPMALAVRLTANITAGHLLMHLIGSATLALSTISLPSTLIIFTILILLTVLEIAVALIQAYVFTLLVSLYLHDNT.

Transmembrane regions (helical) follow at residues 6 to 26 (FASF…IILF), 68 to 88 (WSLM…LGLL), 97 to 117 (QLSM…VMGF), 138 to 158 (IPML…ALAV), 164 to 184 (ITAG…LSTI), and 189 to 209 (TLII…VALI).

The protein belongs to the ATPase A chain family. As to quaternary structure, component of the ATP synthase complex composed at least of ATP5F1A/subunit alpha, ATP5F1B/subunit beta, ATP5MC1/subunit c (homooctomer), MT-ATP6/subunit a, MT-ATP8/subunit 8, ATP5ME/subunit e, ATP5MF/subunit f, ATP5MG/subunit g, ATP5MK/subunit k, ATP5MJ/subunit j, ATP5F1C/subunit gamma, ATP5F1D/subunit delta, ATP5F1E/subunit epsilon, ATP5PF/subunit F6, ATP5PB/subunit b, ATP5PD/subunit d, ATP5PO/subunit OSCP. ATP synthase complex consists of a soluble F(1) head domain (subunits alpha(3) and beta(3)) - the catalytic core - and a membrane F(0) domain - the membrane proton channel (subunits c, a, 8, e, f, g, k and j). These two domains are linked by a central stalk (subunits gamma, delta, and epsilon) rotating inside the F1 region and a stationary peripheral stalk (subunits F6, b, d, and OSCP). Interacts with DNAJC30; interaction is direct.

The protein localises to the mitochondrion inner membrane. The enzyme catalyses H(+)(in) = H(+)(out). Functionally, subunit a, of the mitochondrial membrane ATP synthase complex (F(1)F(0) ATP synthase or Complex V) that produces ATP from ADP in the presence of a proton gradient across the membrane which is generated by electron transport complexes of the respiratory chain. ATP synthase complex consist of a soluble F(1) head domain - the catalytic core - and a membrane F(1) domain - the membrane proton channel. These two domains are linked by a central stalk rotating inside the F(1) region and a stationary peripheral stalk. During catalysis, ATP synthesis in the catalytic domain of F(1) is coupled via a rotary mechanism of the central stalk subunits to proton translocation. With the subunit c (ATP5MC1), forms the proton-conducting channel in the F(0) domain, that contains two crucial half-channels (inlet and outlet) that facilitate proton movement from the mitochondrial intermembrane space (IMS) into the matrix. Protons are taken up via the inlet half-channel and released through the outlet half-channel, following a Grotthuss mechanism. The polypeptide is ATP synthase F(0) complex subunit a (Pan paniscus (Pygmy chimpanzee)).